The following is a 406-amino-acid chain: Proteasome-activating nucleotidase 1 (406 aa).

Positions tyrosine 13–serine 72 form a coiled coil. Residues glycine 194–methionine 199 and histidine 333 each bind ATP. A docks into pockets in the proteasome alpha-ring to cause gate opening region spans residues alanine 404–alanine 406.

This sequence belongs to the AAA ATPase family. As to quaternary structure, homododecamer, in a proposed two stacked hexameric ring configuration, but may also form homohexamer. The hexameric complex has likely a two-ring architecture resembling a top hat that caps the 20S proteasome core at one or both ends. Upon ATP-binding, the C-terminus of PAN probably interacts with the alpha-rings of the proteasome core by binding to the intersubunit pockets. Interacts with SAMP1-MoaE conjugate in vitro, but does not bind to SAMP1 or MoaE alone. Interacts with NcsA.

It is found in the cytoplasm. ATPase activity is inhibited by EDTA in vitro. ATPase which is responsible for recognizing, binding, unfolding and translocation of substrate proteins into the archaeal 20S proteasome core particle. Is essential for opening the gate of the 20S proteasome via an interaction with its C-terminus, thereby allowing substrate entry and access to the site of proteolysis. Thus, the C-terminus of the proteasomal ATPase functions like a 'key in a lock' to induce gate opening and therefore regulate proteolysis. Unfolding activity requires energy from ATP hydrolysis, whereas ATP binding alone promotes ATPase-20S proteasome association which triggers gate opening, and supports translocation of unfolded substrates. Is also able to cleave other nucleoside triphosphates including GTP and TTP, but the rate of hydrolysis is 4- to 5-fold slower than for ATP. In Haloferax volcanii (strain ATCC 29605 / DSM 3757 / JCM 8879 / NBRC 14742 / NCIMB 2012 / VKM B-1768 / DS2) (Halobacterium volcanii), this protein is Proteasome-activating nucleotidase 1.